Consider the following 94-residue polypeptide: Protein S100-A1 (94 aa).

2 consecutive EF-hand domains span residues 13 to 48 (INVF…FLDV) and 50 to 85 (KDAD…LTVA). K28, E33, D63, N65, D67, E69, and E74 together coordinate Ca(2+). At C86 the chain carries S-nitrosocysteine.

The protein belongs to the S-100 family. In terms of assembly, dimer of either two alpha chains, or two beta chains, or one alpha and one beta chain. Also forms heterodimers with S100P. Interacts with AGER. Interacts with CAPZA1. Interacts with FKBP4. Interacts with RYR1 and RYR2. Interacts with CACYBP in a calcium-dependent manner. Interacts with PPP5C (via TPR repeats); the interaction is calcium-dependent and modulates PPP5C activity. Interacts with ATP2A2 and PLN in a Ca(2+)-dependent manner. Interacts with mitochondrial F1-ATPase subunits ATP5F1A and ATP5F1B; these interactions increase F1-ATPase activity. Post-translationally, glutathionylated; glutathionylation increases affinity to calcium about 10-fold. Although predominant among the water-soluble brain proteins, S100 is also found in a variety of other tissues.

The protein resides in the cytoplasm. Its subcellular location is the sarcoplasmic reticulum. It localises to the mitochondrion. Functionally, small calcium binding protein that plays important roles in several biological processes such as Ca(2+) homeostasis, chondrocyte biology and cardiomyocyte regulation. In response to an increase in intracellular Ca(2+) levels, binds calcium which triggers conformational changes. These changes allow interactions with specific target proteins and modulate their activity. Regulates a network in cardiomyocytes controlling sarcoplasmic reticulum Ca(2+) cycling and mitochondrial function through interaction with the ryanodine receptors RYR1 and RYR2, sarcoplasmic reticulum Ca(2+)-ATPase/ATP2A2 and mitochondrial F1-ATPase. Facilitates diastolic Ca(2+) dissociation and myofilament mechanics in order to improve relaxation during diastole. This chain is Protein S100-A1 (S100a1), found in Rattus norvegicus (Rat).